Reading from the N-terminus, the 331-residue chain is tRNA uridine(34) hydroxylase (331 aa).

The region spanning 122 to 218 (KENRCLVLDV…YGQAVGTGKW (97 aa)) is the Rhodanese domain. The Cysteine persulfide intermediate role is filled by Cys-178.

It belongs to the TrhO family.

It catalyses the reaction uridine(34) in tRNA + AH2 + O2 = 5-hydroxyuridine(34) in tRNA + A + H2O. In terms of biological role, catalyzes oxygen-dependent 5-hydroxyuridine (ho5U) modification at position 34 in tRNAs. The polypeptide is tRNA uridine(34) hydroxylase (Chlamydia caviae (strain ATCC VR-813 / DSM 19441 / 03DC25 / GPIC) (Chlamydophila caviae)).